Consider the following 142-residue polypeptide: Large ribosomal subunit protein uL13 (142 aa).

This sequence belongs to the universal ribosomal protein uL13 family. As to quaternary structure, part of the 50S ribosomal subunit.

Functionally, this protein is one of the early assembly proteins of the 50S ribosomal subunit, although it is not seen to bind rRNA by itself. It is important during the early stages of 50S assembly. The polypeptide is Large ribosomal subunit protein uL13 (Mannheimia succiniciproducens (strain KCTC 0769BP / MBEL55E)).